A 382-amino-acid polypeptide reads, in one-letter code: MTVSGAIPSMTKNRTLVVGGTGFIGQFITKASLGFGYPTFLLVRPGPVSPSKAVIIKTFQDKGAKVIYGVINDKECMEKILKEYEIDVVISLVGGARLLDQLTLLEAIKSVKTIKRFLPSEFGHDVDRTDPVEPGLTMYKEKRLVRRAVEEYGIPFTNICCNSIASWPYYDNCHPSQVPPPMDQFQIYGDGNTKAYFIDGNDIGKFTMKTIDDIRTLNKNVHFRPSSNCYSINELASLWEKKIGRTLPRFTVTADKLLAHAAENIIPESIVSSFTHDIFINGCQVNFSIDEHSDVEIDTLYPDEKFRSLDDCYEDFVPMVHDKIHAGKSGEIKIKDGKPLVQTGTIEEINKDIKTLVETQPNEEIKKDMKALVEAVPISAMG.

Residues 19–25, R44, and K52 each bind NADP(+); that span reads GGTGFIG. K142 functions as the Proton acceptor in the catalytic mechanism. R146 lines the NADP(+) pocket.

Belongs to the NmrA-type oxidoreductase family. Isoflavone reductase subfamily. As to quaternary structure, monomer.

It catalyses the reaction (2R,3S)-catechin + NADP(+) + H2O = (2R,3S,4S)-leucocyanidin + NADPH + H(+). Its pathway is flavonoid metabolism; proanthocyanidin biosynthesis. Functionally, catalyzes the synthesis of catechin from 3,4-cis-leucocyanidin. Also synthesizes afzelechin and gallocatechin. This chain is Leucoanthocyanidin reductase (LAR), found in Desmodium uncinatum (Silverleaf Spanish clover).